The primary structure comprises 208 residues: Small ribosomal subunit protein eS8 (208 aa).

The protein belongs to the eukaryotic ribosomal protein eS8 family. Component of the small ribosomal subunit. Identified in a IGF2BP1-dependent mRNP granule complex containing untranslated mRNAs. Part of the small subunit (SSU) processome, composed of more than 70 proteins and the RNA chaperone small nucleolar RNA (snoRNA) U3.

It is found in the cytoplasm. Its subcellular location is the membrane. The protein localises to the nucleus. The protein resides in the nucleolus. In terms of biological role, component of the small ribosomal subunit. The ribosome is a large ribonucleoprotein complex responsible for the synthesis of proteins in the cell. Part of the small subunit (SSU) processome, first precursor of the small eukaryotic ribosomal subunit. During the assembly of the SSU processome in the nucleolus, many ribosome biogenesis factors, an RNA chaperone and ribosomal proteins associate with the nascent pre-rRNA and work in concert to generate RNA folding, modifications, rearrangements and cleavage as well as targeted degradation of pre-ribosomal RNA by the RNA exosome. The polypeptide is Small ribosomal subunit protein eS8 (rps-8) (Caenorhabditis elegans).